We begin with the raw amino-acid sequence, 440 residues long: Chorismate synthase 1, chloroplastic (440 aa).

The N-terminal 54 residues, methionine 1–alanine 54, are a transit peptide targeting the chloroplast. A disordered region spans residues arginine 100–aspartate 147. Over residues cysteine 118–serine 132 the composition is skewed to polar residues.

Belongs to the chorismate synthase family. Homotetramer. The cofactor is FMNH2. Predominantly expressed in flowers and roots and, to a lesser extent, in stems, leaves, and cotyledons.

It is found in the plastid. Its subcellular location is the chloroplast. The enzyme catalyses 5-O-(1-carboxyvinyl)-3-phosphoshikimate = chorismate + phosphate. It functions in the pathway metabolic intermediate biosynthesis; chorismate biosynthesis; chorismate from D-erythrose 4-phosphate and phosphoenolpyruvate: step 7/7. Functionally, catalyzes the last common step of the biosynthesis of aromatic amino acids, produced via the shikimic acid pathway. This chain is Chorismate synthase 1, chloroplastic (CS1), found in Solanum lycopersicum (Tomato).